The primary structure comprises 420 residues: Gamma-glutamyl phosphate reductase (420 aa).

It belongs to the gamma-glutamyl phosphate reductase family.

The protein resides in the cytoplasm. The enzyme catalyses L-glutamate 5-semialdehyde + phosphate + NADP(+) = L-glutamyl 5-phosphate + NADPH + H(+). It functions in the pathway amino-acid biosynthesis; L-proline biosynthesis; L-glutamate 5-semialdehyde from L-glutamate: step 2/2. Catalyzes the NADPH-dependent reduction of L-glutamate 5-phosphate into L-glutamate 5-semialdehyde and phosphate. The product spontaneously undergoes cyclization to form 1-pyrroline-5-carboxylate. The polypeptide is Gamma-glutamyl phosphate reductase (Streptococcus pneumoniae (strain P1031)).